A 434-amino-acid chain; its full sequence is Putative magnesium transporter MRS2-D (434 aa).

3 disordered regions span residues 1 to 21 (MAAR…AAGE), 126 to 171 (AASP…DGEA), and 279 to 311 (EASE…AGGG). Positions 9–21 (AAGAGAPAPAAGE) are enriched in low complexity. Residues 279–291 (EASELEDHSSRDE) show a composition bias toward basic and acidic residues. The next 2 membrane-spanning stretches (helical) occupy residues 367–387 (GILL…TGVF) and 405–425 (FPCA…AALL).

The protein belongs to the CorA metal ion transporter (MIT) (TC 1.A.35.5) family.

It is found in the membrane. Its function is as follows. Putative magnesium transporter. This chain is Putative magnesium transporter MRS2-D (MRS2-D), found in Oryza sativa subsp. indica (Rice).